The following is a 175-amino-acid chain: Trafficking protein particle complex subunit 20 (175 aa).

Belongs to the TRAPP small subunits family. Sedlin subfamily. In terms of assembly, part of the multisubunit TRAPP (transport protein particle) I complex composed of BET3, BET5, TRS20, TRS23, TRS31 and TRS33. Part of the multisubunit TRAPP (transport protein particle) II complex composed of BET3, BET5, TRS20, TRS23, TRS31, TRS33, TRS65, TRS85, TRS120 and TRS130. Part of the multisubunit TRAPP (transport protein particle) III complex composed of BET3, BET5, TRS20, TRS23, TRS31, TRS33 and TRS85.

It is found in the golgi apparatus. Its subcellular location is the cis-Golgi network. It localises to the endoplasmic reticulum. The protein localises to the preautophagosomal structure. In terms of biological role, component of the TRAPP I, TRAPP II and TRAPP III complexes which act as guanine nucleotide exchange factors (GEF) for YPT1. TRAPP I plays a key role in the late stages of endoplasmic reticulum to Golgi traffic. TRAPP II plays a role in intra-Golgi transport. TRAPP III plays a role in autophagosome formation. The chain is Trafficking protein particle complex subunit 20 (TRS20) from Saccharomyces cerevisiae (strain ATCC 204508 / S288c) (Baker's yeast).